Here is a 359-residue protein sequence, read N- to C-terminus: Peptide chain release factor 1 (359 aa).

At glutamine 235 the chain carries N5-methylglutamine. The tract at residues 280–306 is disordered; the sequence is AERQRADSERSADRKSQVGSGDRSERI.

It belongs to the prokaryotic/mitochondrial release factor family. In terms of processing, methylated by PrmC. Methylation increases the termination efficiency of RF1.

Its subcellular location is the cytoplasm. Peptide chain release factor 1 directs the termination of translation in response to the peptide chain termination codons UAG and UAA. This chain is Peptide chain release factor 1, found in Rhizobium leguminosarum bv. trifolii (strain WSM2304).